The sequence spans 413 residues: Glucose-1-phosphate adenylyltransferase (413 aa).

Alpha-D-glucose 1-phosphate is bound by residues Tyr-102, Gly-167, 182–183 (EK), and Ser-200.

It belongs to the bacterial/plant glucose-1-phosphate adenylyltransferase family. In terms of assembly, homotetramer.

The enzyme catalyses alpha-D-glucose 1-phosphate + ATP + H(+) = ADP-alpha-D-glucose + diphosphate. It functions in the pathway glycan biosynthesis; glycogen biosynthesis. Involved in the biosynthesis of ADP-glucose, a building block required for the elongation reactions to produce glycogen. Catalyzes the reaction between ATP and alpha-D-glucose 1-phosphate (G1P) to produce pyrophosphate and ADP-Glc. The protein is Glucose-1-phosphate adenylyltransferase of Deinococcus deserti (strain DSM 17065 / CIP 109153 / LMG 22923 / VCD115).